Consider the following 231-residue polypeptide: 2-C-methyl-D-erythritol 4-phosphate cytidylyltransferase (231 aa).

Belongs to the IspD/TarI cytidylyltransferase family. IspD subfamily.

The catalysed reaction is 2-C-methyl-D-erythritol 4-phosphate + CTP + H(+) = 4-CDP-2-C-methyl-D-erythritol + diphosphate. It participates in isoprenoid biosynthesis; isopentenyl diphosphate biosynthesis via DXP pathway; isopentenyl diphosphate from 1-deoxy-D-xylulose 5-phosphate: step 2/6. Functionally, catalyzes the formation of 4-diphosphocytidyl-2-C-methyl-D-erythritol from CTP and 2-C-methyl-D-erythritol 4-phosphate (MEP). In Shewanella piezotolerans (strain WP3 / JCM 13877), this protein is 2-C-methyl-D-erythritol 4-phosphate cytidylyltransferase.